Reading from the N-terminus, the 340-residue chain is Serpentine receptor class alpha-23 (340 aa).

A run of 6 helical transmembrane segments spans residues 34–54 (FISTIVLISYCFSWLAIQALW), 114–136 (YFYYLTNYFSTYSVFSLTFDRLI), 150–170 (FIAISLLVLQFLLAILSFYIA), 199–219 (VRTVVMVSCIIVTGFAYYLSV), 250–270 (ILIVLQFSCTMISSFGVNLLL), and 284–304 (VGAFLPGVAYANLCLPLAIYF).

It belongs to the nematode receptor-like protein sra family.

The protein localises to the membrane. This Caenorhabditis elegans protein is Serpentine receptor class alpha-23 (sra-23).